A 365-amino-acid chain; its full sequence is Histidinol-phosphate aminotransferase (365 aa).

Lysine 223 bears the N6-(pyridoxal phosphate)lysine mark.

The protein belongs to the class-II pyridoxal-phosphate-dependent aminotransferase family. Histidinol-phosphate aminotransferase subfamily. Homodimer. The cofactor is pyridoxal 5'-phosphate.

It carries out the reaction L-histidinol phosphate + 2-oxoglutarate = 3-(imidazol-4-yl)-2-oxopropyl phosphate + L-glutamate. It functions in the pathway amino-acid biosynthesis; L-histidine biosynthesis; L-histidine from 5-phospho-alpha-D-ribose 1-diphosphate: step 7/9. In Bacillus pumilus (strain SAFR-032), this protein is Histidinol-phosphate aminotransferase.